We begin with the raw amino-acid sequence, 644 residues long: uncharacterized protein (644 aa).

Disordered stretches follow at residues 1 to 35 (MSSHDDDHTPLLISDPSVNKPFRSRTPSPEREYCS) and 48 to 106 (GNSH…SHHN). Position 28 is a phosphoserine (Ser28). The segment covering 58 to 70 (NGASSSNNNVAKS) has biased composition (low complexity). Over residues 83–106 (YDSTSNSNEPISFNEPDSSNSHHN) the composition is skewed to polar residues. Transmembrane regions (helical) follow at residues 131–151 (ILPLNFINAFSWGMIEIPLLF), 190–210 (AAFGSLAAFLGLFSTAYYGTM), 218–238 (LVLFITVSFLLLGDLWLLYQS), 245–265 (YFVLFAAALKGLGGYISTVVA), 286–306 (LNFAAYHLGTALGPSLSGFIV), 314–334 (YVFYITSTFWIIYLLYVWLIL), 398–418 (VLLAAILISLTLLGAGSMGLL), 435–455 (LILSTDSFASSITLVALFPLL), 522–542 (VWNAQLGYAIALSAAVLLAVA), 546–566 (VALFTAVIIQAISNMVVPCVQ), 583–603 (AAFAVFEAVALIIRGPIYAFV), and 614–634 (NMIFFLSAVIYGCCFIIIFFM).

The protein localises to the membrane. This is an uncharacterized protein from Schizosaccharomyces pombe (strain 972 / ATCC 24843) (Fission yeast).